A 264-amino-acid polypeptide reads, in one-letter code: 3'-5' ssDNA/RNA exonuclease TatD (264 aa).

A divalent metal cation is bound by residues E92, H128, and H153.

It belongs to the metallo-dependent hydrolases superfamily. TatD-type hydrolase family. TatD subfamily. Monomer. It depends on Mg(2+) as a cofactor.

The protein resides in the cytoplasm. Its function is as follows. 3'-5' exonuclease that prefers single-stranded DNA and RNA. May play a role in the H(2)O(2)-induced DNA damage repair. This chain is 3'-5' ssDNA/RNA exonuclease TatD, found in Musicola paradisiaca (strain Ech703) (Dickeya paradisiaca).